We begin with the raw amino-acid sequence, 281 residues long: HTH-type transcriptional activator RhaR (281 aa).

In terms of domain architecture, HTH araC/xylS-type spans aspartate 178–arginine 276. 2 consecutive DNA-binding regions (H-T-H motif) follow at residues glutamate 195–threonine 216 and isoleucine 243–isoleucine 266.

Binds DNA as a dimer.

The protein localises to the cytoplasm. Activates expression of the rhaSR operon in response to L-rhamnose. This Klebsiella pneumoniae subsp. pneumoniae (strain ATCC 700721 / MGH 78578) protein is HTH-type transcriptional activator RhaR.